Reading from the N-terminus, the 77-residue chain is uncharacterized protein (77 aa).

The segment covering 1–10 (MFNNKGRRNV) has biased composition (basic residues). Residues 1–21 (MFNNKGRRNVRNNEVRRNVPV) are disordered. Residues 11 to 21 (RNNEVRRNVPV) are compositionally biased toward basic and acidic residues. In terms of domain architecture, TRAM spans 20–77 (PVKEGETYTVTIEDMGRGGDGIARVEGFVVFVPETQKGETVNVKITAVKSKFAFAEKI).

This is an uncharacterized protein from Methanocaldococcus jannaschii (strain ATCC 43067 / DSM 2661 / JAL-1 / JCM 10045 / NBRC 100440) (Methanococcus jannaschii).